Here is a 428-residue protein sequence, read N- to C-terminus: D-amino acid dehydrogenase (428 aa).

Position 3–17 (3–17 (VVVLGSGVVGVTSAY)) interacts with FAD.

The protein belongs to the DadA oxidoreductase family. FAD serves as cofactor.

The catalysed reaction is a D-alpha-amino acid + A + H2O = a 2-oxocarboxylate + AH2 + NH4(+). Its pathway is amino-acid degradation; D-alanine degradation; NH(3) and pyruvate from D-alanine: step 1/1. Functionally, oxidative deamination of D-amino acids. In Paraburkholderia phymatum (strain DSM 17167 / CIP 108236 / LMG 21445 / STM815) (Burkholderia phymatum), this protein is D-amino acid dehydrogenase.